A 1570-amino-acid chain; its full sequence is Mediator of RNA polymerase II transcription subunit 1 (1570 aa).

Short sequence motifs (LXXLL motif) lie at residues Leu585–Leu589 and Leu626–Leu630. Disordered stretches follow at residues Thr592–Asp687, Ser771–Phe880, and Ser922–Asp1561. Residues Thr675–Asp687 show a composition bias toward basic and acidic residues. Polar residues-rich tracts occupy residues Arg788–Phe801, Gly832–Phe861, and Gln931–Leu942. Positions Leu946–Glu958 are enriched in basic and acidic residues. Positions Asn961 to Ser970 are enriched in gly residues. Composition is skewed to low complexity over residues Pro1022–Gly1035, Ser1066–Ser1082, Ser1089–Gly1113, Ser1121–Lys1140, and Ser1152–Ser1161. Polar residues predominate over residues Met1173–Ser1190. Residues Gly1217–Ser1228 are compositionally biased toward gly residues. The span at Asn1229 to Ser1271 shows a compositional bias: low complexity. Residues Val1276–Lys1287 are compositionally biased toward polar residues. Over residues Val1308–Thr1328 the composition is skewed to gly residues. Positions Pro1347–Lys1359 are enriched in basic and acidic residues. 2 stretches are compositionally biased toward polar residues: residues Ser1418–Thr1433 and Pro1441–Asp1455. Over residues Glu1459 to Ser1469 the composition is skewed to low complexity. Residues Lys1494 to Lys1503 show a composition bias toward basic residues. Residues Arg1504–Lys1516 show a composition bias toward basic and acidic residues. The segment covering Met1536–Ser1546 has biased composition (low complexity).

The protein belongs to the Mediator complex subunit 1 family. In terms of assembly, component of the Mediator complex.

It is found in the nucleus. Functionally, component of the Mediator complex, a coactivator involved in the regulated transcription of nearly all RNA polymerase II-dependent genes. Mediator functions as a bridge to convey information from gene-specific regulatory proteins to the basal RNA polymerase II transcription machinery. Mediator is recruited to promoters by direct interactions with regulatory proteins and serves as a scaffold for the assembly of a functional preinitiation complex with RNA polymerase II and the general transcription factors. The protein is Mediator of RNA polymerase II transcription subunit 1 (med1) of Xenopus laevis (African clawed frog).